The chain runs to 500 residues: Phosphatidylserine decarboxylase proenzyme 1, mitochondrial (500 aa).

A mitochondrion; not cleaved when targeted to the endoplasmic reticulum-targeting transit peptide spans 1–48; sequence MSIMPVKNALAQGRTLLMGRMPAVKFSTRMQLRNRTAVLWNRKFSTRL. Asparagine 34 carries N-linked (GlcNAc...) asparagine glycosylation. The Mitochondrial matrix segment spans residues 45-79; it reads STRLFVQQRRSSGEIVDRAKAAAANSGRKQVSMKW. An enables targeting to the endoplasmic reticulum in addition to mitochondria region spans residues 57-101; it reads GEIVDRAKAAAANSGRKQVSMKWVVLTSFTIVLGTILLVSRNDST. A helical membrane pass occupies residues 80–98; sequence VVLTSFTIVLGTILLVSRN. At 99–500 the chain is on the mitochondrial intermembrane side; sequence DSTEEDATEG…LGIIGKNDLK (402 aa). Catalysis depends on charge relay system; for autoendoproteolytic cleavage activity residues aspartate 210, histidine 348, and serine 463. Serine 463 (schiff-base intermediate with substrate; via pyruvic acid; for decarboxylase activity) is an active-site residue. A Pyruvic acid (Ser); by autocatalysis modification is found at serine 463. Residues 475-492 form a required for processing and stability region; it reads FKFDVRVGDKVKMGQKLG.

The protein belongs to the phosphatidylserine decarboxylase family. PSD-B subfamily. Eukaryotic type I sub-subfamily. Heterodimer of a large membrane-associated beta subunit and a small pyruvoyl-containing alpha subunit. Pyruvate serves as cofactor. Post-translationally, glycosylated at Asn-34 in the endoplasmic reticulum. The precursor is imported via the TOM complex into mitochondria, where the N-terminal presequence is cleaved by the matrix-located proteases MPP (MAS1-MAS2) and OCT1. In terms of processing, is synthesized initially as an inactive proenzyme. Formation of the active enzyme involves a self-maturation process in which the active site pyruvoyl group is generated from an internal serine residue via an autocatalytic post-translational modification. Two non-identical subunits are generated from the proenzyme in this reaction, and the pyruvate is formed at the N-terminus of the alpha chain, which is derived from the carboxyl end of the proenzyme. The autoendoproteolytic cleavage occurs by a canonical serine protease mechanism, in which the side chain hydroxyl group of the serine supplies its oxygen atom to form the C-terminus of the beta chain, while the remainder of the serine residue undergoes an oxidative deamination to produce ammonia and the pyruvoyl prosthetic group on the alpha chain. During this reaction, the Ser that is part of the protease active site of the proenzyme becomes the pyruvoyl prosthetic group, which constitutes an essential element of the active site of the mature decarboxylase.

It localises to the mitochondrion inner membrane. Its subcellular location is the lipid droplet. The protein localises to the endoplasmic reticulum membrane. The enzyme catalyses a 1,2-diacyl-sn-glycero-3-phospho-L-serine + H(+) = a 1,2-diacyl-sn-glycero-3-phosphoethanolamine + CO2. It functions in the pathway phospholipid metabolism; phosphatidylethanolamine biosynthesis; phosphatidylethanolamine from CDP-diacylglycerol: step 2/2. Its function is as follows. Catalyzes the formation of phosphatidylethanolamine (PtdEtn) from phosphatidylserine (PtdSer). Plays a central role in phospholipid metabolism and in the interorganelle trafficking of phosphatidylserine. Phosphatidylethanolamine formed in the mitochondria is exported to other membranes to fullfill their requirements for PtdEtn. Required for normal mitochondrial morphology and proper mitochondrial fusion during yeast mating. Involved in lipid droplet biogenesis at the endoplasmic reticulum membrane. Required for induction of mitophagy during nitrogen starvation. Appears to play a specific role in supporting respiratory complex III activity. The sequence is that of Phosphatidylserine decarboxylase proenzyme 1, mitochondrial from Saccharomyces cerevisiae (strain ATCC 204508 / S288c) (Baker's yeast).